The sequence spans 604 residues: Elongation factor 4 (604 aa).

Residues 7 to 189 (SKIRNFCIIA…SIVHLVPPPS (183 aa)) form the tr-type G domain. GTP contacts are provided by residues 19–24 (DHGKST) and 136–139 (NKID).

This sequence belongs to the TRAFAC class translation factor GTPase superfamily. Classic translation factor GTPase family. LepA subfamily.

It is found in the cell inner membrane. The catalysed reaction is GTP + H2O = GDP + phosphate + H(+). Required for accurate and efficient protein synthesis under certain stress conditions. May act as a fidelity factor of the translation reaction, by catalyzing a one-codon backward translocation of tRNAs on improperly translocated ribosomes. Back-translocation proceeds from a post-translocation (POST) complex to a pre-translocation (PRE) complex, thus giving elongation factor G a second chance to translocate the tRNAs correctly. Binds to ribosomes in a GTP-dependent manner. The sequence is that of Elongation factor 4 from Synechococcus sp. (strain ATCC 27144 / PCC 6301 / SAUG 1402/1) (Anacystis nidulans).